Here is a 312-residue protein sequence, read N- to C-terminus: MPFEHVTVLLHEAIALLDIKPEGTYVDATLGGGGHTGEILKQLTTGTLYSFDQDDTAIQYNAEQYADEIAAGKLVIIHKNFRTLTSALADYGVTAVDGIVYDLGVSSVQFDDGQRGFSYKYDAELDMRMDQRQALTAKTIVNEWPFNELMRVLSRYGEDRFPKQIARKIEQHRENAPINTTFELVDIIKEAIPAPARRKGGHPAKRSFQAFRIAVNDELGALEDSLTQALELLATDGKISVITFQSLEDRLVKQMFREKSSAPELPAGLPVLPGQFEADYELLTRKPISPSTEEMAINHRAESAKLRGIRRK.

S-adenosyl-L-methionine contacts are provided by residues 33–35 (GGH), aspartate 52, phenylalanine 81, aspartate 102, and glutamine 109.

Belongs to the methyltransferase superfamily. RsmH family.

Its subcellular location is the cytoplasm. It catalyses the reaction cytidine(1402) in 16S rRNA + S-adenosyl-L-methionine = N(4)-methylcytidine(1402) in 16S rRNA + S-adenosyl-L-homocysteine + H(+). Functionally, specifically methylates the N4 position of cytidine in position 1402 (C1402) of 16S rRNA. The sequence is that of Ribosomal RNA small subunit methyltransferase H from Leuconostoc mesenteroides subsp. mesenteroides (strain ATCC 8293 / DSM 20343 / BCRC 11652 / CCM 1803 / JCM 6124 / NCDO 523 / NBRC 100496 / NCIMB 8023 / NCTC 12954 / NRRL B-1118 / 37Y).